Consider the following 511-residue polypeptide: Maturase K (511 aa).

Belongs to the intron maturase 2 family. MatK subfamily.

It localises to the plastid. The protein localises to the chloroplast. In terms of biological role, usually encoded in the trnK tRNA gene intron. Probably assists in splicing its own and other chloroplast group II introns. The polypeptide is Maturase K (Campsis radicans (Trumpet creeper)).